The primary structure comprises 140 residues: Small ribosomal subunit protein bS6 (140 aa).

Positions 96-140 are disordered; that stretch reads VTGQSEMLKAEENRSERRERRERPENAESNDGDDSDSNDSDNADE. Over residues 103-121 the composition is skewed to basic and acidic residues; the sequence is LKAEENRSERRERRERPEN. The span at 123–140 shows a compositional bias: acidic residues; that stretch reads ESNDGDDSDSNDSDNADE.

This sequence belongs to the bacterial ribosomal protein bS6 family.

In terms of biological role, binds together with bS18 to 16S ribosomal RNA. In Ectopseudomonas mendocina (strain ymp) (Pseudomonas mendocina), this protein is Small ribosomal subunit protein bS6.